A 55-amino-acid chain; its full sequence is uncharacterized protein (55 aa).

Residues 27–47 form a helical membrane-spanning segment; it reads IFLIYHFSPIYCPYLFLFTVF.

It is found in the membrane. This is an uncharacterized protein from Acheta domesticus (House cricket).